The chain runs to 112 residues: Carboxysome shell protein CcmK4 (112 aa).

A BMC domain is found at 6 to 92 (AVGSIETIGF…PHENVVAVLP (87 aa)).

It belongs to the bacterial microcompartments protein family. CcmK subfamily. In terms of assembly, homohexamer. Interacts with full-length CcmM. Forms mixed heterohexamers with CcmK3, probably with 1:5 CcmK3:CcmK4 stoichiometry. Only very weak interactions with CcmK1 and CcmK2 were seen.

The protein localises to the carboxysome. Functionally, a probably minor shell protein component of the carboxysome, a polyhedral inclusion where RuBisCO (ribulose bisphosphate carboxylase, rbcL-rbcS) is sequestered. The central pore probably regulates metabolite flux, as might the gaps between assembled homohexamers. Homohexamers make sheets that probably form the facets of the polyhedral carboxysome. This subunit probably makes both homohexamers and heterohexamers with CcmK3. The polypeptide is Carboxysome shell protein CcmK4 (Synechocystis sp. (strain ATCC 27184 / PCC 6803 / Kazusa)).